The primary structure comprises 34 residues: Sperm protein EM1 (34 aa).

Residues 1–17 (AGSKSRSRSRSRSRSKS) are compositionally biased toward basic residues. Positions 1–34 (AGSKSRSRSRSRSRSKSPAKSASPKSAASPRASR) are disordered. 7 consecutive repeat copies span residues 3–4 (SK), 5–6 (SR), 7–8 (SR), 9–10 (SR), 11–12 (SR), 13–14 (SR), and 15–16 (SK). The interval 3 to 16 (SKSRSRSRSRSRSK) is 7 X 2 AA tandem repeats of S-[KR]. The segment covering 18 to 34 (PAKSASPKSAASPRASR) has biased composition (low complexity).

In terms of tissue distribution, sperm.

It localises to the nucleus. This chain is Sperm protein EM1, found in Ensis minor (Razor shell).